The primary structure comprises 165 residues: Probable velvet family sexual development regulator CC1G_12219 (165 aa).

Positions 1–121 (MSNTDAQTSF…SVWGAQVNVR (121 aa)) constitute a Velvet domain.

This sequence belongs to the velvet family.

The protein resides in the nucleus. Its function is as follows. Velvet-domain-containing protein that probably acts as a positive regulator of sexual development. This is Probable velvet family sexual development regulator CC1G_12219 from Coprinopsis cinerea (strain Okayama-7 / 130 / ATCC MYA-4618 / FGSC 9003) (Inky cap fungus).